Reading from the N-terminus, the 443-residue chain is MITRFAPSPTGYLHVGNVRTALICWLYVRKQKGKFLLRFDDTDTQRSQEEYIKEIENDLKWLNMNWDASFRQSSRFDRYEDVFQYLLKEGFLYPCYESKEELEFKRKMKLKSGLPPIYDRSALNLTQAEKDKYFGRAPYFRFKINQDQLINWDDEIRGKVSFNPKNISDPIIRRVDGTYTYMLPSVIDDMDFNVTHVIRGEDHISNTAVQIQMLDALKAKVPMFAHLSLLYSDDNKISKRVGGSSVKDMQLYELEPMAINSYFAKIGTSHPIDVHINMLGLINSFDITAFSQAPTKFNIDDILKLNPKILHNMSFDDVKDRLKELKIDKPAFWDFVCGNIEKFSDIEEWIKICSRDMVPVVKQDDKDFITLALNMFPQGEVHDSTWNTWVSNIKQQTDRRGKNLFAPLRLALTGLAAGPELAKLLPLIGREEIVRRLSYSVTQ.

A 'HIGH' region motif is present at residues 7 to 17 (PSPTGYLHVGN). The 'KMSKS' region motif lies at 236–240 (KISKR). Position 239 (lysine 239) interacts with ATP.

Belongs to the class-I aminoacyl-tRNA synthetase family. Glutamate--tRNA ligase type 1 subfamily. Monomer.

It is found in the cytoplasm. The catalysed reaction is tRNA(Glu) + L-glutamate + ATP = L-glutamyl-tRNA(Glu) + AMP + diphosphate. Catalyzes the attachment of glutamate to tRNA(Glu) in a two-step reaction: glutamate is first activated by ATP to form Glu-AMP and then transferred to the acceptor end of tRNA(Glu). The chain is Glutamate--tRNA ligase 2 from Ehrlichia canis (strain Jake).